We begin with the raw amino-acid sequence, 163 residues long: Nucleotide-binding protein all4662 (163 aa).

Belongs to the YajQ family.

In terms of biological role, nucleotide-binding protein. This is Nucleotide-binding protein all4662 from Nostoc sp. (strain PCC 7120 / SAG 25.82 / UTEX 2576).